Reading from the N-terminus, the 672-residue chain is UvrABC system protein B (672 aa).

Residues 26-181 enclose the Helicase ATP-binding domain; the sequence is AGLEDGLAYQ…ILQRLAELQY (156 aa). Residue 39–46 coordinates ATP; the sequence is GVTGSGKT. A Beta-hairpin motif is present at residues 92–115; the sequence is YYDYYQPEAYVPSSDTYIEKDASI. Positions 430-592 constitute a Helicase C-terminal domain; that stretch reads QVDDLLSEIK…ITPKSIQKAV (163 aa). Positions 631–666 constitute a UVR domain; sequence AKELRKLEEQMYHHARNLEFEEAAAVRDKIQHIRKG.

It belongs to the UvrB family. In terms of assembly, forms a heterotetramer with UvrA during the search for lesions. Interacts with UvrC in an incision complex.

Its subcellular location is the cytoplasm. In terms of biological role, the UvrABC repair system catalyzes the recognition and processing of DNA lesions. A damage recognition complex composed of 2 UvrA and 2 UvrB subunits scans DNA for abnormalities. Upon binding of the UvrA(2)B(2) complex to a putative damaged site, the DNA wraps around one UvrB monomer. DNA wrap is dependent on ATP binding by UvrB and probably causes local melting of the DNA helix, facilitating insertion of UvrB beta-hairpin between the DNA strands. Then UvrB probes one DNA strand for the presence of a lesion. If a lesion is found the UvrA subunits dissociate and the UvrB-DNA preincision complex is formed. This complex is subsequently bound by UvrC and the second UvrB is released. If no lesion is found, the DNA wraps around the other UvrB subunit that will check the other stand for damage. This Coxiella burnetii (strain CbuK_Q154) (Coxiella burnetii (strain Q154)) protein is UvrABC system protein B.